The primary structure comprises 569 residues: Estrogen receptor (569 aa).

The tract at residues 1-151 is modulating; that stretch reads MYPKEEHSAG…GFDSGKETRF (151 aa). Over residues 28 to 37 the composition is skewed to polar residues; the sequence is PTQTFGTSSP. The disordered stretch occupies residues 28-65; sequence PTQTFGTSSPAEPASVGYYPAPPDPHEEHLQTLGGGSS. NR C4-type zinc fingers lie at residues 152–172 and 188–212; these read CAVC…CEGC and CPAT…LRKC. Residues 152 to 217 constitute a DNA-binding region (nuclear receptor); sequence CAVCSDYASG…RLRKCYEVGM (66 aa). The segment at 218–278 is hinge; sequence MKGGIRKDRG…SGGVVSTLCM (61 aa). The segment at 223-271 is disordered; the sequence is RKDRGGRSVRRERRRSSNEDRDKSSSDQCSRAGVRTTGPQDKRKKRSGG. Residues 237-247 are compositionally biased toward basic and acidic residues; it reads RSSNEDRDKSS. Residues 279-515 form the NR LBD domain; sequence SPDQVLLLLL…DLLLEMLDAQ (237 aa). The segment covering 523–532 has biased composition (polar residues); sequence VQRVWSQSEK. A disordered region spans residues 523 to 569; it reads VQRVWSQSEKNPPSTPTTSSSSSNNSPRGGAAAIQSNGACHSHSPDP. Over residues 538-549 the composition is skewed to low complexity; sequence PTTSSSSSNNSP.

The protein belongs to the nuclear hormone receptor family. NR3 subfamily. As to quaternary structure, binds DNA as a homodimer. Can form a heterodimer with ER-beta.

The protein localises to the nucleus. In terms of biological role, the steroid hormones and their receptors are involved in the regulation of eukaryotic gene expression and affect cellular proliferation and differentiation in target tissues. This is Estrogen receptor (esr1) from Danio rerio (Zebrafish).